Here is a 320-residue protein sequence, read N- to C-terminus: Malate dehydrogenase (320 aa).

Residues 10-15 (GSGMIG) and D34 contribute to the NAD(+) site. Residues R83 and R89 each coordinate substrate. NAD(+)-binding positions include N96 and 119-121 (ITN). Positions 121 and 152 each coordinate substrate. H176 serves as the catalytic Proton acceptor.

The protein belongs to the LDH/MDH superfamily. MDH type 3 family.

It catalyses the reaction (S)-malate + NAD(+) = oxaloacetate + NADH + H(+). Its function is as follows. Catalyzes the reversible oxidation of malate to oxaloacetate. The chain is Malate dehydrogenase from Agrobacterium fabrum (strain C58 / ATCC 33970) (Agrobacterium tumefaciens (strain C58)).